The following is a 173-amino-acid chain: Small ribosomal subunit protein uS5 (173 aa).

The S5 DRBM domain maps to 18–81 (YVEKLVKLNR…EKAKANMVTF (64 aa)).

It belongs to the universal ribosomal protein uS5 family. As to quaternary structure, part of the 30S ribosomal subunit. Contacts proteins S4 and S8.

Its function is as follows. With S4 and S12 plays an important role in translational accuracy. Functionally, located at the back of the 30S subunit body where it stabilizes the conformation of the head with respect to the body. This chain is Small ribosomal subunit protein uS5, found in Treponema denticola (strain ATCC 35405 / DSM 14222 / CIP 103919 / JCM 8153 / KCTC 15104).